Reading from the N-terminus, the 342-residue chain is S-adenosylmethionine:tRNA ribosyltransferase-isomerase (342 aa).

The protein belongs to the QueA family. In terms of assembly, monomer.

Its subcellular location is the cytoplasm. It catalyses the reaction 7-aminomethyl-7-carbaguanosine(34) in tRNA + S-adenosyl-L-methionine = epoxyqueuosine(34) in tRNA + adenine + L-methionine + 2 H(+). Its pathway is tRNA modification; tRNA-queuosine biosynthesis. Its function is as follows. Transfers and isomerizes the ribose moiety from AdoMet to the 7-aminomethyl group of 7-deazaguanine (preQ1-tRNA) to give epoxyqueuosine (oQ-tRNA). This chain is S-adenosylmethionine:tRNA ribosyltransferase-isomerase, found in Bacillus pumilus (strain SAFR-032).